A 243-amino-acid polypeptide reads, in one-letter code: Carboxy-S-adenosyl-L-methionine synthase (243 aa).

S-adenosyl-L-methionine is bound by residues tyrosine 39, 64-66 (GCS), asparagine 132, and arginine 199.

It belongs to the class I-like SAM-binding methyltransferase superfamily. Cx-SAM synthase family. As to quaternary structure, homodimer.

The enzyme catalyses prephenate + S-adenosyl-L-methionine = carboxy-S-adenosyl-L-methionine + 3-phenylpyruvate + H2O. Its function is as follows. Catalyzes the conversion of S-adenosyl-L-methionine (SAM) to carboxy-S-adenosyl-L-methionine (Cx-SAM). This chain is Carboxy-S-adenosyl-L-methionine synthase, found in Alteromonas mediterranea (strain DSM 17117 / CIP 110805 / LMG 28347 / Deep ecotype).